A 192-amino-acid polypeptide reads, in one-letter code: Phosphomevalonate kinase (192 aa).

ATP contacts are provided by residues 17-23 (KRKSGKD) and Arg141. Asn170 contributes to the substrate binding site. The ATP site is built by His171 and Gln180.

Monomer.

Its subcellular location is the cytoplasm. It localises to the cytosol. The enzyme catalyses (R)-5-phosphomevalonate + ATP = (R)-5-diphosphomevalonate + ADP. Its pathway is isoprenoid biosynthesis; isopentenyl diphosphate biosynthesis via mevalonate pathway; isopentenyl diphosphate from (R)-mevalonate: step 2/3. Catalyzes the reversible ATP-dependent phosphorylation of mevalonate 5-phosphate to produce mevalonate diphosphate and ADP, a key step in the mevalonic acid mediated biosynthesis of isopentenyl diphosphate and other polyisoprenoid metabolites. In Mus musculus (Mouse), this protein is Phosphomevalonate kinase (Pmvk).